We begin with the raw amino-acid sequence, 576 residues long: MMLPTKRPAPDHGDDERNEVMVPEPKRRTNLKKNIMGVGGLSFNKIVLNLEPMLRIWVHEAVEAAIRSSIHPSSRPSLNRIEASRGRRLQLRFVDKPPSTIFTGSKVEAENGNPIRIILVDATSQAMVSSGSLSSIKVEIVVLNGEFGTDERQDWTENEFNASVLREREGRRPLVTGDLNITLVDGVGTVDNVIFTDNSSWIRCRKFRLGARIVQRSAGEVTIREATSDAFMVKDHRGELYKKHYPPLLHDEVWRLERIAKDGAFHKRLAYKNVHTVKDFLRLLVTDPIALRNILGGGISNRVWETIIEHALSCVPDDDEWYTYHGTAQRVELLLNSIYNVVKVTFDGQDYLPVENLTFSQKLLVEDAKRQAYKNVWNLTPFDRRAIMGPSMPFTDLLPEPVGTSNLLLQQHDFSGTRPDMPLGLNQSSTSFSYEVENPKPLQGIEPLNPMLRNSSFRMEGIFPYNADNSFSFFADDGFGTNQDNTQAQMLSLTSATPAWAQGSGFIFTPDYETSSISFLSSFPSCNVNDRSIGETREVCPKNRWLKVRAVIQWKSISRGAAKRRRQHWLQHGICT.

The segment at 1–25 (MMLPTKRPAPDHGDDERNEVMVPEP) is disordered. Residues 1–80 (MMLPTKRPAP…HPSSRPSLNR (80 aa)) form a calmodulin-binding region. Basic and acidic residues predominate over residues 8–25 (PAPDHGDDERNEVMVPEP). Positions 150 to 273 (DERQDWTENE…AFHKRLAYKN (124 aa)) are DNA-binding.

Belongs to the plant ACBP60 protein family. (Microbial infection) Interacts with V.dahliae SCP41. As to quaternary structure, interacts with calmodulin (CaM).

Its subcellular location is the nucleus. Its function is as follows. Transcription activator that binds DNA in a sequence-specific manner, likely 5'-GAAATTTTGG-3', to promote the expression of target genes. Required for pathogen resistance. In Gossypium hirsutum (Upland cotton), this protein is Calmodulin-binding protein 60 B.